The primary structure comprises 219 residues: Inner membrane protein YghB (219 aa).

The Cytoplasmic segment spans residues 1–17 (MAVIQDIIAALWQHDFA). The helical transmembrane segment at 18-38 (ALANPHVVSVVYFVMFATLFL) threads the bilayer. The Periplasmic portion of the chain corresponds to 39–67 (ENGLLPASFLPGDSLLLLAGALIAQDVMH). The chain crosses the membrane as a helical span at residues 68–88 (FLPTIGILTAAASLGCWLSYI). The Cytoplasmic portion of the chain corresponds to 89–160 (QGRWLGNTRT…RRFQFFNWLS (72 aa)). The chain crosses the membrane as a helical span at residues 161–181 (GLLWVTVVTSFGYALSMIPFV). Residues 182–191 (KRHEDQVMTF) lie on the Periplasmic side of the membrane. A helical membrane pass occupies residues 192-212 (LMILPVALLVAGLLGTLVVVI). At 213 to 219 (KKKYCNA) the chain is on the cytoplasmic side.

The protein belongs to the DedA family.

It is found in the cell inner membrane. This is Inner membrane protein YghB (yghB) from Salmonella typhimurium (strain LT2 / SGSC1412 / ATCC 700720).